The chain runs to 175 residues: DDB1- and CUL4-associated factor 16 (175 aa).

The disordered stretch occupies residues 1-42 (MGPRNPSPDPLSESESEEEENTNYLNESSGEEWDSSEEEDPV). Composition is skewed to acidic residues over residues 12–21 (SESESEEEEN) and 29–41 (SGEE…EEDP). At Lys-61 the chain carries N6-acetyllysine.

Interacts with DDB1 and CUL4A.

The protein localises to the nucleus. The protein operates within protein modification; protein ubiquitination. Functions as a substrate recognition component for CUL4-DDB1 E3 ubiquitin-protein ligase complex, which mediates ubiquitination and proteasome-dependent degradation of nuclear proteins. The chain is DDB1- and CUL4-associated factor 16 (DCAF16) from Bos taurus (Bovine).